A 224-amino-acid chain; its full sequence is Heme response regulator HssR (224 aa).

In terms of domain architecture, Response regulatory spans 3–116 (QCLVVDDDPR…ELIFRIRAVL (114 aa)). A 4-aspartylphosphate modification is found at Asp52. Positions 124-222 (NSEMTIGNLT…VRGQGYKVEN (99 aa)) form a DNA-binding region, ompR/PhoB-type.

Phosphorylated by HssS.

It is found in the cytoplasm. In terms of biological role, member of the two-component regulatory system HssS/HssR involved in intracellular heme homeostasis and tempering of staphylococcal virulence. Phosphorylated HssR binds to a direct repeat sequence within hrtAB promoter and activates the expression of hrtAB, an efflux pump, in response to extracellular heme, hemin, hemoglobin or blood. This Staphylococcus aureus (strain COL) protein is Heme response regulator HssR (hssR).